The primary structure comprises 287 residues: MSDQPMNEVQDNAAPANPWLELRRLTPARIALGRTGTSLPTCAQLDFQAAHAQARDAVHLAFDHAAISAQLAEKGRETILLHSAAADRDSYLQRPDLGRRLNDESAQTLRDYAAAHPGGLDLAVVVADGLSALAVHRHAVPFLTRLEEQASAEGWTLSPVLMVEQGRVAVADEIGELLGAKMVVILIGERPGLSSPDSLGLYFTYAPKVGLNDAHRNCISNVRLEGLSYAMAAHRLLYLMREACKRQISGVSLKDEAQLNTLESDDSAENSDRKIGNFLLDGPAVPH.

The adenosylcob(III)alamin site is built by Val168, Glu189, and Cys218.

This sequence belongs to the EutC family. As to quaternary structure, the basic unit is a heterodimer which dimerizes to form tetramers. The heterotetramers trimerize; 6 large subunits form a core ring with 6 small subunits projecting outwards. Requires adenosylcob(III)alamin as cofactor.

The protein resides in the bacterial microcompartment. It carries out the reaction ethanolamine = acetaldehyde + NH4(+). Its pathway is amine and polyamine degradation; ethanolamine degradation. Its function is as follows. Catalyzes the deamination of various vicinal amino-alcohols to oxo compounds. Allows this organism to utilize ethanolamine as the sole source of nitrogen and carbon in the presence of external vitamin B12. The chain is Ethanolamine ammonia-lyase small subunit from Pseudomonas syringae pv. tomato (strain ATCC BAA-871 / DC3000).